The chain runs to 1073 residues: MAEIIHHSNVFTWAFHVSEYDGAPLLLLGSFSSVASVSLKRSGDLLLFERFTLPARTRSVALLSSHFLQSESGRHSIANILIATENGKCYLLQLVKTPEKAFPTIRIRDEFVLDTRMYNHEQLGKSIDLCPNASLWATNSFAGDIVFFFSHHPSLSKQVFAQLSIDGIILHTIFVPPKRSSSSCVTYVCLFLDSNSNPRINVYRWSKTETFSDASSYITFSIPVPSEFSLASHIIPCSNIPDHFLVLLETKICLLSVPQIECGDLKFLQTDLPCSGSHNYPLSIANDNETPNCCYLTYENGDLYRIRYSILSIDINLIGKTGSSLGNLILPCYPYIVFCGDCSDTLVYDVSVSPMSFFGSLIACAPMWDFVYSSSRHNTLLDEDINCNTVYATAGIGKSGCLVTMRYGCSSTTLLEAILTEGAVLSGIINSNHNSEFYAWLTYPWQTQILRLHLDGVVEDVTESLFLDDIKALYVINYQNTFIIITGKSIYAVTPSCTKYNLLEVSGDEEFVLAAYNELIFIVKKDLMNFKSQLLTLKLNTLSNGTLELQSLPDSFDLHDVPTCITSFSLERKLLVILVHPSPYFECVFYDETSHSSVYKVPLTGFQFGYLPHSISYLRKSNRAVYVLISSNSTLLTVYVTLTLEGVPDFKVYSNPISTDLPLTLQSPSDEFSTIYAWSDYLYIVGIDMETEQPTLNQILEVNDSFTCVSGIYDIPNKFQNSESRIIVYYSNNTLYLSELWLPQRTFSSKLNLAATPKRLLVDKYTNTLIIGCCHVLVNEITTSGLAFYDLTNSRLFPVNWPSMDIKGKPIFKPEELLYSMSFWIVADDQKRKYRYLCIGTGVRKNGLTTGRLLILTMNKDHDSNAIELRNVITINMKDPIYSVCSIGKHGLCYATGRKIGVKMLDLDSKKFCNSDCELPVRSPIVSMSTYKDYVYTSSLRDSVAVFQYDSENNSLNLVCSDTSSRLGIDCFYISQKKLLFSCDKDRLLTCFKVEGEVCTSTREQMLQPILTTVSQTKTNALTNHLKYSVIRVDKDNHNIVWGLMGCTLDGNIFKILMPNDPTSSDTIIYSDT.

The first 36 residues, 1-36 (MAEIIHHSNVFTWAFHVSEYDGAPLLLLGSFSSVAS), serve as a signal peptide directing secretion. N-linked (GlcNAc...) asparagine glycosylation is present at N132. Residue 392–399 (ATAGIGKS) participates in ATP binding. Residues N544, N632, N703, N732, and N953 are each glycosylated (N-linked (GlcNAc...) asparagine).

This is an uncharacterized protein from Schizosaccharomyces pombe (strain 972 / ATCC 24843) (Fission yeast).